Consider the following 242-residue polypeptide: Glucosamine-6-phosphate deaminase (242 aa).

Asp67 acts as the Proton acceptor; for enolization step in catalysis. The active-site For ring-opening step is Asn136. The active-site Proton acceptor; for ring-opening step is His138. Glu143 functions as the For ring-opening step in the catalytic mechanism.

The protein belongs to the glucosamine/galactosamine-6-phosphate isomerase family. NagB subfamily.

The catalysed reaction is alpha-D-glucosamine 6-phosphate + H2O = beta-D-fructose 6-phosphate + NH4(+). It participates in amino-sugar metabolism; N-acetylneuraminate degradation; D-fructose 6-phosphate from N-acetylneuraminate: step 5/5. Its function is as follows. Catalyzes the reversible isomerization-deamination of glucosamine 6-phosphate (GlcN6P) to form fructose 6-phosphate (Fru6P) and ammonium ion. This Clostridium perfringens (strain ATCC 13124 / DSM 756 / JCM 1290 / NCIMB 6125 / NCTC 8237 / Type A) protein is Glucosamine-6-phosphate deaminase.